A 512-amino-acid polypeptide reads, in one-letter code: ATP synthase subunit alpha (512 aa).

169-176 lines the ATP pocket; the sequence is GDRQTGKT.

Belongs to the ATPase alpha/beta chains family. F-type ATPases have 2 components, CF(1) - the catalytic core - and CF(0) - the membrane proton channel. CF(1) has five subunits: alpha(3), beta(3), gamma(1), delta(1), epsilon(1). CF(0) has three main subunits: a(1), b(2) and c(9-12). The alpha and beta chains form an alternating ring which encloses part of the gamma chain. CF(1) is attached to CF(0) by a central stalk formed by the gamma and epsilon chains, while a peripheral stalk is formed by the delta and b chains.

Its subcellular location is the cell inner membrane. The enzyme catalyses ATP + H2O + 4 H(+)(in) = ADP + phosphate + 5 H(+)(out). In terms of biological role, produces ATP from ADP in the presence of a proton gradient across the membrane. The alpha chain is a regulatory subunit. The sequence is that of ATP synthase subunit alpha from Ruegeria pomeroyi (strain ATCC 700808 / DSM 15171 / DSS-3) (Silicibacter pomeroyi).